The chain runs to 404 residues: Keratin, type I cuticular Ha3-I (404 aa).

Positions 1–56 (MSYSCGLPSLSCRTSCSSRPCVPPSCHGCTLPGACNIPANVSNCNWFCEGSFNGSE) are head. Residues 56–367 (EKETMQFLND…SLLESEDCKL (312 aa)) enclose the IF rod domain. The interval 57 to 91 (KETMQFLNDRLASYLEKVRQLERDNAELENLIRER) is coil 1A. The tract at residues 92-102 (SQQQEPLVCAS) is linker 1. Positions 103–203 (YQSYFKTIEE…HEQEVNTLRC (101 aa)) are coil 1B. Residues 204 to 219 (QLGDRLNVEVDAAPTV) are linker 12. The tract at residues 220-363 (DLNQVLNETR…NTYRSLLESE (144 aa)) is coil 2. Residues 364 to 404 (DCKLPSNPCATTNACDKSTGPCISNPCGLRARCGPCNTFGY) form a tail region.

This sequence belongs to the intermediate filament family. Expressed in the hair follicles.

This Homo sapiens (Human) protein is Keratin, type I cuticular Ha3-I (KRT33A).